The primary structure comprises 395 residues: Flap endonuclease 1 (395 aa).

Residues 1–108 (MGILGLSKLL…DELEMRRQKA (108 aa)) are N-domain. Mg(2+) is bound at residue Asp-34. Arg-74 contacts DNA. Asp-90 contributes to the Mg(2+) binding site. The interval 116 to 136 (EKAKDAGDDEMMEKMSKRTVR) is disordered. An I-domain region spans residues 126–257 (MMEKMSKRTV…QKAWEGIQRY (132 aa)). Residues Glu-162, Glu-164, Asp-183, and Asp-185 each contribute to the Mg(2+) site. A DNA-binding site is contributed by Glu-162. The DNA site is built by Gly-235 and Asp-237. Asp-237 lines the Mg(2+) pocket. Positions 340–348 (TQGRLDSFF) are interaction with PCNA.

The protein belongs to the XPG/RAD2 endonuclease family. FEN1 subfamily. In terms of assembly, interacts with PCNA. Three molecules of FEN1 bind to one PCNA trimer with each molecule binding to one PCNA monomer. PCNA stimulates the nuclease activity without altering cleavage specificity. Mg(2+) is required as a cofactor. In terms of processing, phosphorylated. Phosphorylation upon DNA damage induces relocalization to the nuclear plasma.

It is found in the nucleus. It localises to the nucleolus. The protein resides in the nucleoplasm. The protein localises to the mitochondrion. Structure-specific nuclease with 5'-flap endonuclease and 5'-3' exonuclease activities involved in DNA replication and repair. During DNA replication, cleaves the 5'-overhanging flap structure that is generated by displacement synthesis when DNA polymerase encounters the 5'-end of a downstream Okazaki fragment. It enters the flap from the 5'-end and then tracks to cleave the flap base, leaving a nick for ligation. Also involved in the long patch base excision repair (LP-BER) pathway, by cleaving within the apurinic/apyrimidinic (AP) site-terminated flap. Acts as a genome stabilization factor that prevents flaps from equilibrating into structures that lead to duplications and deletions. Also possesses 5'-3' exonuclease activity on nicked or gapped double-stranded DNA, and exhibits RNase H activity. Also involved in replication and repair of rDNA and in repairing mitochondrial DNA. In Leishmania major, this protein is Flap endonuclease 1.